We begin with the raw amino-acid sequence, 347 residues long: NADH-ubiquinone oxidoreductase chain 2 (347 aa).

The next 11 helical transmembrane spans lie at 1-21, 25-45, 59-79, 96-116, 127-147, 149-169, 178-198, 200-220, 247-267, 276-296, and 325-345; these read MNPL…AIVM, HWLT…PMLM, YFLT…MNLT, IIMT…FWVP, CLIL…MISP, INLN…GWGG, IMAY…AYNP, MTML…MLLI, IMLS…WMII, IIMP…YMRL, and LLSP…MMSL.

The protein belongs to the complex I subunit 2 family. Core subunit of respiratory chain NADH dehydrogenase (Complex I) which is composed of 45 different subunits. Interacts with TMEM242.

Its subcellular location is the mitochondrion inner membrane. The catalysed reaction is a ubiquinone + NADH + 5 H(+)(in) = a ubiquinol + NAD(+) + 4 H(+)(out). In terms of biological role, core subunit of the mitochondrial membrane respiratory chain NADH dehydrogenase (Complex I) which catalyzes electron transfer from NADH through the respiratory chain, using ubiquinone as an electron acceptor. Essential for the catalytic activity and assembly of complex I. This chain is NADH-ubiquinone oxidoreductase chain 2, found in Natalus stramineus (Mexican funnel-eared bat).